We begin with the raw amino-acid sequence, 204 residues long: ATP-dependent Clp protease proteolytic subunit 1 (204 aa).

Ser97 serves as the catalytic Nucleophile. His122 is a catalytic residue.

It belongs to the peptidase S14 family. In terms of assembly, fourteen ClpP subunits assemble into 2 heptameric rings which stack back to back to give a disk-like structure with a central cavity, resembling the structure of eukaryotic proteasomes.

Its subcellular location is the cytoplasm. The enzyme catalyses Hydrolysis of proteins to small peptides in the presence of ATP and magnesium. alpha-casein is the usual test substrate. In the absence of ATP, only oligopeptides shorter than five residues are hydrolyzed (such as succinyl-Leu-Tyr-|-NHMec, and Leu-Tyr-Leu-|-Tyr-Trp, in which cleavage of the -Tyr-|-Leu- and -Tyr-|-Trp bonds also occurs).. In terms of biological role, cleaves peptides in various proteins in a process that requires ATP hydrolysis. Has a chymotrypsin-like activity. Plays a major role in the degradation of misfolded proteins. The polypeptide is ATP-dependent Clp protease proteolytic subunit 1 (Trichormus variabilis (strain ATCC 29413 / PCC 7937) (Anabaena variabilis)).